Here is a 267-residue protein sequence, read N- to C-terminus: Tryptophan synthase alpha chain (267 aa).

Active-site proton acceptor residues include glutamate 49 and aspartate 60.

Belongs to the TrpA family. As to quaternary structure, tetramer of two alpha and two beta chains.

It catalyses the reaction (1S,2R)-1-C-(indol-3-yl)glycerol 3-phosphate + L-serine = D-glyceraldehyde 3-phosphate + L-tryptophan + H2O. It participates in amino-acid biosynthesis; L-tryptophan biosynthesis; L-tryptophan from chorismate: step 5/5. The alpha subunit is responsible for the aldol cleavage of indoleglycerol phosphate to indole and glyceraldehyde 3-phosphate. The chain is Tryptophan synthase alpha chain from Acaryochloris marina (strain MBIC 11017).